The sequence spans 269 residues: Protein TORNADO 2 (269 aa).

Residues M1–C10 lie on the Cytoplasmic side of the membrane. Residues I11 to I31 form a helical membrane-spanning segment. The Extracellular segment spans residues G32–P44. Residues V45 to W65 traverse the membrane as a helical segment. The Cytoplasmic portion of the chain corresponds to R66–L71. A helical transmembrane segment spans residues V72–I92. Residues Y93–D231 lie on the Extracellular side of the membrane. N-linked (GlcNAc...) asparagine glycosylation is present at N200. The helical transmembrane segment at I232–F252 threads the bilayer. The Cytoplasmic portion of the chain corresponds to R253–T269.

Belongs to the tetraspanin (TM4SF) family. Expressed in seedlings, roots, leaves, stems, apex, siliques and flowers. Present in ovules, prominently in nucellus and integuments.

The protein resides in the membrane. Its function is as follows. Involved in the basipetal transport of auxin (IAA) that modulates growth and organs organization, as well as cell differentiation. Regulates shoot apical meristem (SAM) organization in the peripheral zone. Required for initial meristematic divisions in the epidermal/lateral root cap leading to the formation of epidermal cells and a clone of lateral root cap cells, as well as for the maintenance of the radial pattern of cell specification in the root, thus regulating the distinction between the lateral root cap and epidermis. Together with WIH peptides, promotes megasporogenesis. This Arabidopsis thaliana (Mouse-ear cress) protein is Protein TORNADO 2 (TRN2).